Consider the following 767-residue polypeptide: Receptor-type tyrosine-protein phosphatase-like ida-1 (767 aa).

The first 19 residues, methionine 1 to alanine 19, serve as a signal peptide directing secretion. At phenylalanine 20–aspartate 398 the chain is on the lumenal side. 2 N-linked (GlcNAc...) asparagine glycosylation sites follow: asparagine 26 and asparagine 146. Residues tryptophan 399–alanine 419 form a helical membrane-spanning segment. The Cytoplasmic segment spans residues alanine 420–lysine 767. Positions serine 527–glutamate 756 constitute a Tyrosine-protein phosphatase domain.

It belongs to the protein-tyrosine phosphatase family. Receptor class 8 subfamily. Post-translationally, proteolytically cleaved probably at a dibasic consensus sequence by egl-3. In hermaphrodites specifically expressed in neurons and in particular in the head nerve ring (ADE, ALA, ASI, ASK, AUA, ASG, AVH and AVJ neurons), in the ventral nerve cord, pre-anal ganglia (PVP neuron), in the tail (PHA, PHB and PHC neurons) and in vulval motor neurons VC and HSN and the vulval uv1 cells. In males, also expressed in neurons anterior to the nerve ring and male-specific neurons in the tail.

It is found in the cytoplasmic vesicle membrane. The protein resides in the perikaryon. It localises to the cell projection. The protein localises to the axon. Its subcellular location is the dendrite. Regulates dense-core vesicle (DCV) trafficking and/or secretion. Probably by controlling DCV trafficking, plays a role in the AVG neuron-mediated formation of the right axon tract of the ventral nerve cord. Involved in locomotion by regulating acetylcholine release. Probably by controlling the secretion of FLP neuropeptides, regulates the turning step of male mating behavior. Plays a role in preventing dauer formation. The sequence is that of Receptor-type tyrosine-protein phosphatase-like ida-1 from Caenorhabditis elegans.